The chain runs to 611 residues: Threonine--tRNA ligase (611 aa).

The catalytic stretch occupies residues 209–502; the sequence is DHRRLGKDLE…MTENYAGDFP (294 aa). Cys302, His353, and His479 together coordinate Zn(2+).

Belongs to the class-II aminoacyl-tRNA synthetase family. Homodimer. Zn(2+) serves as cofactor.

Its subcellular location is the cytoplasm. It catalyses the reaction tRNA(Thr) + L-threonine + ATP = L-threonyl-tRNA(Thr) + AMP + diphosphate + H(+). Its function is as follows. Catalyzes the attachment of threonine to tRNA(Thr) in a two-step reaction: L-threonine is first activated by ATP to form Thr-AMP and then transferred to the acceptor end of tRNA(Thr). Also edits incorrectly charged L-seryl-tRNA(Thr). This is Threonine--tRNA ligase from Synechococcus sp. (strain CC9902).